The chain runs to 701 residues: Polyribonucleotide nucleotidyltransferase (701 aa).

Mg(2+)-binding residues include aspartate 485 and aspartate 491. The KH domain maps to proline 552–isoleucine 611. One can recognise an S1 motif domain in the interval glycine 621–lysine 689.

Belongs to the polyribonucleotide nucleotidyltransferase family. Requires Mg(2+) as cofactor.

The protein localises to the cytoplasm. The enzyme catalyses RNA(n+1) + phosphate = RNA(n) + a ribonucleoside 5'-diphosphate. In terms of biological role, involved in mRNA degradation. Catalyzes the phosphorolysis of single-stranded polyribonucleotides processively in the 3'- to 5'-direction. The chain is Polyribonucleotide nucleotidyltransferase from Clostridium beijerinckii (strain ATCC 51743 / NCIMB 8052) (Clostridium acetobutylicum).